We begin with the raw amino-acid sequence, 173 residues long: RNA pyrophosphohydrolase (173 aa).

The region spanning 13–166 (PYRPCVGLMI…KRKVYEEVVA (154 aa)) is the Nudix hydrolase domain. A Nudix box motif is present at residues 54–75 (GGIDKGEEPLQAAERELYEETG).

The protein belongs to the Nudix hydrolase family. RppH subfamily. A divalent metal cation serves as cofactor.

Accelerates the degradation of transcripts by removing pyrophosphate from the 5'-end of triphosphorylated RNA, leading to a more labile monophosphorylated state that can stimulate subsequent ribonuclease cleavage. This is RNA pyrophosphohydrolase from Mesorhizobium japonicum (strain LMG 29417 / CECT 9101 / MAFF 303099) (Mesorhizobium loti (strain MAFF 303099)).